A 511-amino-acid polypeptide reads, in one-letter code: Bifunctional purine biosynthesis protein PurH (511 aa).

Residues Met1–Val144 enclose the MGS-like domain.

It belongs to the PurH family.

The enzyme catalyses (6R)-10-formyltetrahydrofolate + 5-amino-1-(5-phospho-beta-D-ribosyl)imidazole-4-carboxamide = 5-formamido-1-(5-phospho-D-ribosyl)imidazole-4-carboxamide + (6S)-5,6,7,8-tetrahydrofolate. It carries out the reaction IMP + H2O = 5-formamido-1-(5-phospho-D-ribosyl)imidazole-4-carboxamide. Its pathway is purine metabolism; IMP biosynthesis via de novo pathway; 5-formamido-1-(5-phospho-D-ribosyl)imidazole-4-carboxamide from 5-amino-1-(5-phospho-D-ribosyl)imidazole-4-carboxamide (10-formyl THF route): step 1/1. It participates in purine metabolism; IMP biosynthesis via de novo pathway; IMP from 5-formamido-1-(5-phospho-D-ribosyl)imidazole-4-carboxamide: step 1/1. In Pediococcus pentosaceus (strain ATCC 25745 / CCUG 21536 / LMG 10740 / 183-1w), this protein is Bifunctional purine biosynthesis protein PurH.